We begin with the raw amino-acid sequence, 144 residues long: Glycine-rich protein HC1 (144 aa).

A helical transmembrane segment spans residues 5–25; it reads IFLLLGLSIAFAILISSEVAA. 11 tandem repeats follow at residues 37 to 42, 43 to 48, 50 to 55, 56 to 61, 63 to 68, 69 to 74, 76 to 81, 82 to 87, 89 to 94, 102 to 107, and 108 to 113. Residues 37 to 113 form an 11 X 6 AA tandem repeats of G-Y-[NH]-N-G -G region; that stretch reads GYNNGGGYHN…NNGGGYHGGG (77 aa).

Belongs to the GRP family.

It localises to the membrane. In Oxybasis rubra (Red goosefoot), this protein is Glycine-rich protein HC1.